Consider the following 202-residue polypeptide: MGAMQTQALGMVPMVIEQSGRGERSYDIYSRLLKERVIFLVGPVNDYVANLVVAQLLFLESDNPDKDISFYINSPGGSVSAGMAIFDTMNFVKPDVSTLCTGMAASMGAFLLAAGAKGKRFSLPNSKVMIHQPSGGSQGQATEIEIQAREILKTREQLNKILAERTGQPLARIERDTERDYYMSADECKEYGLIDQVISKRA.

Ser106 functions as the Nucleophile in the catalytic mechanism. His131 is a catalytic residue.

This sequence belongs to the peptidase S14 family. Fourteen ClpP subunits assemble into 2 heptameric rings which stack back to back to give a disk-like structure with a central cavity, resembling the structure of eukaryotic proteasomes.

It localises to the cytoplasm. It catalyses the reaction Hydrolysis of proteins to small peptides in the presence of ATP and magnesium. alpha-casein is the usual test substrate. In the absence of ATP, only oligopeptides shorter than five residues are hydrolyzed (such as succinyl-Leu-Tyr-|-NHMec, and Leu-Tyr-Leu-|-Tyr-Trp, in which cleavage of the -Tyr-|-Leu- and -Tyr-|-Trp bonds also occurs).. In terms of biological role, cleaves peptides in various proteins in a process that requires ATP hydrolysis. Has a chymotrypsin-like activity. Plays a major role in the degradation of misfolded proteins. This Albidiferax ferrireducens (strain ATCC BAA-621 / DSM 15236 / T118) (Rhodoferax ferrireducens) protein is ATP-dependent Clp protease proteolytic subunit.